We begin with the raw amino-acid sequence, 132 residues long: Small ribosomal subunit protein uS13 (132 aa).

The disordered stretch occupies residues 106–132 (PVRGQVTQKNARTRKGPRKTVAGKKGK). The segment covering 116-132 (ARTRKGPRKTVAGKKGK) has biased composition (basic residues).

It belongs to the universal ribosomal protein uS13 family. In terms of assembly, part of the 30S ribosomal subunit. Forms a loose heterodimer with protein S19. Forms two bridges to the 50S subunit in the 70S ribosome.

In terms of biological role, located at the top of the head of the 30S subunit, it contacts several helices of the 16S rRNA. In the 70S ribosome it contacts the 23S rRNA (bridge B1a) and protein L5 of the 50S subunit (bridge B1b), connecting the 2 subunits; these bridges are implicated in subunit movement. Contacts the tRNAs in the A and P-sites. The chain is Small ribosomal subunit protein uS13 from Mycoplasmopsis pulmonis (strain UAB CTIP) (Mycoplasma pulmonis).